The primary structure comprises 270 residues: Metallo-beta-lactamase type 2 (270 aa).

The N-terminal stretch at 1 to 28 is a signal peptide; that stretch reads MELPNIMHPVAKLSTALAAALMLSGCMP. Residues histidine 120, histidine 122, aspartate 124, histidine 189, and cysteine 208 each coordinate Zn(2+). Lysine 211 and asparagine 220 together coordinate substrate. Histidine 250 is a binding site for Zn(2+).

The protein belongs to the metallo-beta-lactamase superfamily. Class-B beta-lactamase family. In terms of assembly, monomer. It depends on Zn(2+) as a cofactor.

Its subcellular location is the periplasm. It catalyses the reaction a beta-lactam + H2O = a substituted beta-amino acid. With respect to regulation, inhibits by captopril, thiorphan, dimercaprol and tiopronin. This enzyme is not susceptible to inactivation by the beta-lactamase-blocking agents clavulanic acid. Confers resistance to the different beta-lactams antibiotics (penicillin, cephalosporin and carbapenem) via the hydrolysis of the beta-lactam ring. Does not confer resistance to the polymixin colistin or the fluoroquinolone ciprofloxacin. The chain is Metallo-beta-lactamase type 2 from Klebsiella pneumoniae.